Reading from the N-terminus, the 141-residue chain is Putative antiporter subunit mnhB2 (141 aa).

The next 4 membrane-spanning stretches (helical) occupy residues 10-30, 35-55, 70-90, and 116-136; these read TVTKIVVFILLTFGFYLFLAG, GGGFIGGLVFSSAFLLMFLAF, ILMICGSLLSFLTAVVPMFFG, and VFEAGIVLAVVGVVVTVMLSI.

The protein belongs to the CPA3 antiporters (TC 2.A.63) subunit B family. May form a heterooligomeric complex that consists of seven subunits: mnhA2, mnhB2, mnhC2, mnhD2, mnhE2, mnhF2 and mnhG2.

The protein resides in the cell membrane. The polypeptide is Putative antiporter subunit mnhB2 (mnhB2) (Staphylococcus saprophyticus subsp. saprophyticus (strain ATCC 15305 / DSM 20229 / NCIMB 8711 / NCTC 7292 / S-41)).